Consider the following 173-residue polypeptide: MSDTATTEGTPAGDPTPVVTDKPLEPTPKTYDEAYVKELRQEAAAARVAKKDAVEAAVKAANDAHTAELAARDTRITELENELGQAWIRLQKLETSLAAKVPSDKVLAFVDILQGEDADSIAESAKKNLELIGGFDKKPVSGFDPTQGFGGRQELPLNGDPILNAMKGVLGIK.

The segment at 1-30 (MSDTATTEGTPAGDPTPVVTDKPLEPTPKT) is disordered. A coiled-coil region spans residues 36 to 56 (VKELRQEAAAARVAKKDAVEA).

Belongs to the L5likevirus scaffolding protein family.

In terms of biological role, scaffolding protein involved in the icosahedric procapsid assembly. Coassembles with the capsid proteins to form the procapsid, in which the scaffolding protein is found within the external shell of icosahedrally arranged capsid protein subunits. This is Probable capsid assembly scaffolding protein (16) from Mycobacterium (Mycobacteriophage D29).